We begin with the raw amino-acid sequence, 349 residues long: D-alanine--D-alanine ligase (349 aa).

The region spanning Lys132 to Asp335 is the ATP-grasp domain. Val162–Glu217 serves as a coordination point for ATP. The Mg(2+) site is built by Asp289, Glu302, and Asn304.

This sequence belongs to the D-alanine--D-alanine ligase family. Requires Mg(2+) as cofactor. Mn(2+) is required as a cofactor.

The protein resides in the cytoplasm. It catalyses the reaction 2 D-alanine + ATP = D-alanyl-D-alanine + ADP + phosphate + H(+). The protein operates within cell wall biogenesis; peptidoglycan biosynthesis. Its function is as follows. Cell wall formation. The protein is D-alanine--D-alanine ligase of Lactococcus lactis subsp. cremoris (strain MG1363).